The sequence spans 459 residues: Paired box protein Pax-8 (459 aa).

Positions 9–135 (GHGGLNQLGG…SSINRIIRTK (127 aa)) form a DNA-binding region, paired. Residues 12–68 (GLNQLGGAFVNGRPLPEVVRQRIVDLAHQGVRPCDISRQLRVSHGCVSKILGRYYET) are PAI subdomain. The RED subdomain stretch occupies residues 87 to 135 (KVVEKIGDYKRQNPTMFAWEIRDRLLAEGVCDNDTVPSVSSINRIIRTK). The segment covering 159 to 182 (LIPSSAVTPPESPQSDSLGSTYSI) has biased composition (polar residues). The disordered stretch occupies residues 159 to 223 (LIPSSAVTPP…QSSSSGPRKH (65 aa)). S305 carries the post-translational modification Phosphoserine.

In terms of assembly, interacts with WWTR1.

Its subcellular location is the nucleus. Thought to encode a transcription factor. It may have a role in kidney cell differentiation. May play a regulatory role in mammalian development. This chain is Paired box protein Pax-8 (PAX8), found in Canis lupus familiaris (Dog).